The chain runs to 2609 residues: Mycosubtilin synthase subunit C (2609 aa).

A domain 1 (D-serine-activating) region spans residues 258-1628; that stretch reads PREKTIHQLF…RVCAQPEMTV (1371 aa). An adenylation 1 region spans residues 288 to 695; that stretch reads TYQELNEKAN…HIPSIQESIV (408 aa). The region spanning 771-845 is the Carrier 1 domain; sequence APRTELEKIL…ELVPYVEPVT (75 aa). An O-(pantetheine 4'-phosphoryl)serine modification is found at serine 806. Positions 853–1312 are epimerization 1; the sequence is IKGPALLTPI…EISIDELDQF (460 aa). The segment at 1322 to 1623 is condensation 1; it reads IENIYPLTPM…NTIPVRVCAQ (302 aa). The domain 2 (isoleucine-activating) stretch occupies residues 1778-2359; the sequence is PKEKTIYQLF…AHAIQAAALP (582 aa). An adenylation 2 region spans residues 1808–2205; sequence TYRQLNEQAN…LVESVKEAVV (398 aa). The region spanning 2282–2357 is the Carrier 2 domain; the sequence is APRTLIEKQL…TMAHAIQAAA (76 aa). Serine 2317 carries the post-translational modification O-(pantetheine 4'-phosphoryl)serine. Residues 2375–2581 form a thioesterase region; sequence IPVFCFPPLI…ENMSTIRSIM (207 aa).

It belongs to the ATP-dependent AMP-binding enzyme family. It depends on pantetheine 4'-phosphate as a cofactor.

Its function is as follows. This protein is a multifunctional enzyme, able to activate and polymerize the amino acids Ser and Asn as part of the synthesis of mycosubtilin. The Ser residue is further epimerized to the D-isomer form. The activation sites for these amino acids consist of individual domains. The chain is Mycosubtilin synthase subunit C (mycC) from Bacillus subtilis.